The sequence spans 331 residues: Biotin synthase (331 aa).

Residues 48–278 (FDSQKFEFCS…SAELRLCGGR (231 aa)) form the Radical SAM core domain. The [4Fe-4S] cluster site is built by Cys66, Cys70, and Cys73. [2Fe-2S] cluster-binding residues include Cys110, Cys143, Cys203, and Arg273.

Belongs to the radical SAM superfamily. Biotin synthase family. As to quaternary structure, homodimer. Requires [4Fe-4S] cluster as cofactor. [2Fe-2S] cluster serves as cofactor.

The enzyme catalyses (4R,5S)-dethiobiotin + (sulfur carrier)-SH + 2 reduced [2Fe-2S]-[ferredoxin] + 2 S-adenosyl-L-methionine = (sulfur carrier)-H + biotin + 2 5'-deoxyadenosine + 2 L-methionine + 2 oxidized [2Fe-2S]-[ferredoxin]. Its pathway is cofactor biosynthesis; biotin biosynthesis; biotin from 7,8-diaminononanoate: step 2/2. In terms of biological role, catalyzes the conversion of dethiobiotin (DTB) to biotin by the insertion of a sulfur atom into dethiobiotin via a radical-based mechanism. This is Biotin synthase from Hydrogenobaculum sp. (strain Y04AAS1).